The sequence spans 370 residues: Dual-specificity RNA methyltransferase RlmN (370 aa).

The active-site Proton acceptor is the glutamate 93. In terms of domain architecture, Radical SAM core spans 99–337 (AEGRGTLCVS…VTTVRKTRGD (239 aa)). Cysteine 106 and cysteine 343 are disulfide-bonded. [4Fe-4S] cluster is bound by residues cysteine 113, cysteine 117, and cysteine 120. S-adenosyl-L-methionine is bound by residues 167–168 (GE), serine 199, 221–223 (SLH), and asparagine 300. Catalysis depends on cysteine 343, which acts as the S-methylcysteine intermediate.

It belongs to the radical SAM superfamily. RlmN family. It depends on [4Fe-4S] cluster as a cofactor.

The protein resides in the cytoplasm. The enzyme catalyses adenosine(2503) in 23S rRNA + 2 reduced [2Fe-2S]-[ferredoxin] + 2 S-adenosyl-L-methionine = 2-methyladenosine(2503) in 23S rRNA + 5'-deoxyadenosine + L-methionine + 2 oxidized [2Fe-2S]-[ferredoxin] + S-adenosyl-L-homocysteine. It carries out the reaction adenosine(37) in tRNA + 2 reduced [2Fe-2S]-[ferredoxin] + 2 S-adenosyl-L-methionine = 2-methyladenosine(37) in tRNA + 5'-deoxyadenosine + L-methionine + 2 oxidized [2Fe-2S]-[ferredoxin] + S-adenosyl-L-homocysteine. In terms of biological role, specifically methylates position 2 of adenine 2503 in 23S rRNA and position 2 of adenine 37 in tRNAs. m2A2503 modification seems to play a crucial role in the proofreading step occurring at the peptidyl transferase center and thus would serve to optimize ribosomal fidelity. This chain is Dual-specificity RNA methyltransferase RlmN, found in Francisella tularensis subsp. tularensis (strain FSC 198).